We begin with the raw amino-acid sequence, 163 residues long: Small ribosomal subunit protein uS3m (163 aa).

The transit peptide at 1–31 directs the protein to the mitochondrion; that stretch reads MAASLIRQTKLLSVFSSAGCFRSIHSTAACL.

This sequence belongs to the universal ribosomal protein uS3 family. In terms of assembly, component of the mitochondrial ribosome small subunit (28S) which comprises a 12S rRNA and about 30 distinct proteins.

It is found in the mitochondrion. This chain is Small ribosomal subunit protein uS3m (mrps24), found in Danio rerio (Zebrafish).